A 430-amino-acid chain; its full sequence is 3-phosphoshikimate 1-carboxyvinyltransferase (430 aa).

Residues Lys-23, Ser-24, and Arg-28 each coordinate 3-phosphoshikimate. Residue Lys-23 participates in phosphoenolpyruvate binding. Residues Gly-95 and Arg-123 each coordinate phosphoenolpyruvate. 3-phosphoshikimate is bound by residues Ser-169, Gln-171, Asp-315, and Lys-342. Residue Gln-171 coordinates phosphoenolpyruvate. Catalysis depends on Asp-315, which acts as the Proton acceptor. Arg-346 and Arg-388 together coordinate phosphoenolpyruvate.

The protein belongs to the EPSP synthase family. As to quaternary structure, monomer.

The protein localises to the cytoplasm. The enzyme catalyses 3-phosphoshikimate + phosphoenolpyruvate = 5-O-(1-carboxyvinyl)-3-phosphoshikimate + phosphate. Its pathway is metabolic intermediate biosynthesis; chorismate biosynthesis; chorismate from D-erythrose 4-phosphate and phosphoenolpyruvate: step 6/7. Catalyzes the transfer of the enolpyruvyl moiety of phosphoenolpyruvate (PEP) to the 5-hydroxyl of shikimate-3-phosphate (S3P) to produce enolpyruvyl shikimate-3-phosphate and inorganic phosphate. This Streptococcus pyogenes serotype M3 (strain ATCC BAA-595 / MGAS315) protein is 3-phosphoshikimate 1-carboxyvinyltransferase.